Reading from the N-terminus, the 812-residue chain is ISWI one complex protein 2 (812 aa).

Disordered stretches follow at residues 1-21, 614-646, 679-704, and 762-812; these read MRTK…AGAA, MGNS…KRKP, AKQR…LEEL, and QTGS…PPTN. Positions 627–638 are enriched in polar residues; the sequence is PQSTLEPSTKSS. Residues 673 to 714 are a coiled coil; the sequence is ELKIIRAKQRKQQEDRERRKKMKEEKKRLEELAKKRELTESV. Over residues 683–704 the composition is skewed to basic and acidic residues; the sequence is KQQEDRERRKKMKEEKKRLEEL. Positions 769 to 796 are enriched in low complexity; sequence PQAPQAPQTSQASIQPQQQQQQQQQQQP.

In terms of assembly, component of the ISW1B complex, which at least consists of ISW1, IOC2 and IOC4.

The protein resides in the nucleus. Functionally, functions as a component of the ISW1B complex, which acts in remodeling the chromatin by catalyzing an ATP-dependent alteration in the structure of nucleosomal DNA. The ISW1B complex acts within coding regions to control the amount of RNA polymerase II released into productive elongation and to coordinate elongation with termination and pre-mRNA processing. This Saccharomyces cerevisiae (strain ATCC 204508 / S288c) (Baker's yeast) protein is ISWI one complex protein 2 (IOC2).